The sequence spans 579 residues: Cytochrome P450 monooxygenase ORF6 (579 aa).

A glycan (N-linked (GlcNAc...) asparagine) is linked at asparagine 2. The chain crosses the membrane as a helical span at residues 7 to 29 (PLGSFVGTTLLLFILYKLVKLAY). Residues asparagine 194 and asparagine 390 are each glycosylated (N-linked (GlcNAc...) asparagine). Cysteine 512 is a binding site for heme.

It belongs to the cytochrome P450 family. The cofactor is heme.

Its subcellular location is the membrane. It functions in the pathway sesquiterpene biosynthesis. Cytochrome P450 monooxygenase; part of the gene cluster that mediates the biosynthesis of PR-toxin, a bicyclic sesquiterpene belonging to the eremophilane class and acting as a mycotoxin. The first step of the pathway is catalyzed by the aristolochene synthase which performs the cyclization of trans,trans-farnesyl diphosphate (FPP) to the bicyclic sesquiterpene aristolochene. Following the formation of aristolochene, the non-oxygenated aristolochene is converted to the trioxygenated intermediate eremofortin B, via 7-epi-neopetasone. This conversion appears to involve three enzymes, a hydroxysterol oxidase-like enzyme, the quinone-oxidase prx3 that forms the quinone-type-structure in the bicyclic nucleus of aristolochene with the C8-oxo group and the C-3 hydroxyl group, and the P450 monooxygenase ORF6 that introduces the epoxide at the double bond between carbons 1 and 2. No monoxy or dioxy-intermediates have been reported to be released to the broth, so these three early oxidative reactions may be coupled together. Eremofortin B is further oxidized by another P450 monooxygenase, that introduces a second epoxide between carbons 7 and 11 prior to acetylation to eremofortin A by the acetyltransferase ORF8. The second epoxidation may be performed by a second P450 monooxygenase. After the acetylation step, eremofortin A is converted to eremofortin C and then to PR-toxin. First the conversion of eremofortin A to eremofortin C proceeds by oxidation of the side chain of the molecule at C-12 and is catalyzed by the short-chain oxidoreductase prx1. The cytochrome P450 monooxygenase ORF6 is probably also involved in this step. The primary alcohol formed at C-12 is finally oxidized by the short-chain alcohol dehydrogenase prx4 that forms PR-toxin. The sequence is that of Cytochrome P450 monooxygenase ORF6 from Penicillium roqueforti (strain FM164).